The sequence spans 489 residues: Probable guanine deaminase (489 aa).

Zn(2+) is bound by residues His100 and His102. Substrate contacts are provided by residues 102-105 (HVSQ), 231-232 (RF), 258-261 (HLSE), and Asp348. Zn(2+) contacts are provided by His258 and Asp348.

Belongs to the metallo-dependent hydrolases superfamily. ATZ/TRZ family. It depends on Zn(2+) as a cofactor.

The protein localises to the cytoplasm. The catalysed reaction is guanine + H2O + H(+) = xanthine + NH4(+). It functions in the pathway purine metabolism; guanine degradation; xanthine from guanine: step 1/1. In terms of biological role, catalyzes the hydrolytic deamination of guanine, producing xanthine and ammonia. The sequence is that of Probable guanine deaminase (GUD1) from Saccharomyces cerevisiae (strain ATCC 204508 / S288c) (Baker's yeast).